The sequence spans 427 residues: Homoserine O-acetyltransferase FUB5 (427 aa).

Residues 1 to 13 (MTTTTTAPALPTP) are compositionally biased toward low complexity. A disordered region spans residues 1-35 (MTTTTTAPALPTPIHDGLGNGTTYERSIPRPVNPF). Residues 77 to 400 (NVMIICHALS…VSDDGHDAFL (324 aa)) enclose the AB hydrolase-1 domain. Ser175 (nucleophile) is an active-site residue. The interval 260–297 (RFGRDTGNKKKAKNKGSETLPSNSTPIHSQGGADETPV) is disordered. A compositionally biased stretch (polar residues) spans 276 to 287 (SETLPSNSTPIH). Catalysis depends on residues Asp367 and His396.

Belongs to the AB hydrolase superfamily. MetX family.

The catalysed reaction is L-homoserine + acetyl-CoA = O-acetyl-L-homoserine + CoA. It functions in the pathway mycotoxin biosynthesis. Homoserine O-acetyltransferase; part of the gene cluster that mediates the biosynthesis of fusaric acid, a mycotoxin with low to moderate toxicity to animals and humans, but with high phytotoxic properties. L-aspartate is suggested as fusaric acid amino acid precursor that is activated and further processed to O-acetyl-L-homoserine by cluster enzymes aspartate kinase FUB3 and homoserine O-acetyltransferase FUB5, as well as enzymes of the primary metabolism. The polyketide synthase (PKS) FUB1 generates the triketide trans-2-hexenal which is presumptively released by the hydrolase FUB4 and linked to the NRPS-bound amino acid precursor by NAD(P)-dependent dehydrogenase FUB6. FUB1, FUB4, and the non-canonical NRPS Fub8 may form an enzyme complex. Further processing of the NRPS-bound intermediate might be carried out by FUB6 and the sulfhydrylase FUB7, enabling a spontaneous electrocyclization to close the carbon backbone of fusaric acid. Dihydrofusaric acid is likely to be released via reduction by the thioester reductase (TR) domain of FUB8 whereupon the final oxidation to fusaric acid may (also) be performed by the FMN-dependent dehydrogenase FUB9. This Gibberella fujikuroi (strain CBS 195.34 / IMI 58289 / NRRL A-6831) (Bakanae and foot rot disease fungus) protein is Homoserine O-acetyltransferase FUB5.